The chain runs to 2388 residues: Highly reducing polyketide synthase Preu1 (2388 aa).

Residues 7 to 432 (NDDIAIVGLA…GTNAHVILDD (426 aa)) form the Ketosynthase family 3 (KS3) domain. Active-site for beta-ketoacyl synthase activity residues include cysteine 180, histidine 315, and histidine 355. Positions 549 to 875 (GFVFTGQGAQ…SSVLMRGEDG (327 aa)) are malonyl-CoA:ACP transacylase (MAT) domain. Serine 641 functions as the For malonyltransferase activity in the catalytic mechanism. The N-terminal hotdog fold stretch occupies residues 940-1074 (HDLLGAPTQD…GLGKIHYRPE (135 aa)). A PKS/mFAS DH domain is found at 940–1256 (HDLLGAPTQD…CRELPNGNSQ (317 aa)). Residues 941–1251 (DLLGAPTQDS…VEGLRCRELP (311 aa)) form a dehydratase (DH) domain region. Histidine 972 functions as the Proton acceptor; for dehydratase activity in the catalytic mechanism. The C-terminal hotdog fold stretch occupies residues 1102–1256 (TASISPVDFY…CRELPNGNSQ (155 aa)). Aspartate 1167 (proton donor; for dehydratase activity) is an active-site residue. Positions 1676 to 1983 (KLPSDARFTS…VPTGLGKAVL (308 aa)) are enoyl reductase (ER) domain. Residues 2007 to 2191 (ATYVLAGGLG…AATSVDLGLM (185 aa)) are ketoreductase (KR) domain. The Carrier domain occupies 2303–2380 (QANGIVLEAL…ALAEKISKAS (78 aa)). Serine 2340 carries the O-(pantetheine 4'-phosphoryl)serine modification.

It depends on pantetheine 4'-phosphate as a cofactor.

Highly reducing polyketide synthase; part of a gene cluster that mediates the biosynthesis of a yet unidentified natural product. In Preussia isomera (Coprophilous fungus), this protein is Highly reducing polyketide synthase Preu1.